Reading from the N-terminus, the 335-residue chain is Nicotinate-nucleotide--dimethylbenzimidazole phosphoribosyltransferase (335 aa).

The active-site Proton acceptor is Glu-304.

This sequence belongs to the CobT family.

The enzyme catalyses 5,6-dimethylbenzimidazole + nicotinate beta-D-ribonucleotide = alpha-ribazole 5'-phosphate + nicotinate + H(+). Its pathway is nucleoside biosynthesis; alpha-ribazole biosynthesis; alpha-ribazole from 5,6-dimethylbenzimidazole: step 1/2. Functionally, catalyzes the synthesis of alpha-ribazole-5'-phosphate from nicotinate mononucleotide (NAMN) and 5,6-dimethylbenzimidazole (DMB). The polypeptide is Nicotinate-nucleotide--dimethylbenzimidazole phosphoribosyltransferase (Thermus thermophilus (strain ATCC 27634 / DSM 579 / HB8)).